The primary structure comprises 332 residues: UDP-N-acetylenolpyruvoylglucosamine reductase (332 aa).

The FAD-binding PCMH-type domain occupies 55–221 (VGGAADLYVA…TQATLQLAPG (167 aa)). Residue Arg200 is part of the active site. Ser251 acts as the Proton donor in catalysis. Residue Glu321 is part of the active site.

This sequence belongs to the MurB family. FAD serves as cofactor.

The protein resides in the cytoplasm. The catalysed reaction is UDP-N-acetyl-alpha-D-muramate + NADP(+) = UDP-N-acetyl-3-O-(1-carboxyvinyl)-alpha-D-glucosamine + NADPH + H(+). Its pathway is cell wall biogenesis; peptidoglycan biosynthesis. Cell wall formation. This chain is UDP-N-acetylenolpyruvoylglucosamine reductase, found in Nostoc punctiforme (strain ATCC 29133 / PCC 73102).